Reading from the N-terminus, the 563-residue chain is Group II intron-interrupted relaxase LtrB (563 aa).

Y44 is an active-site residue. Positions 159 and 161 each coordinate Mg(2+).

Belongs to the mobilization (MOB) protein type 1 family. The cofactor is Mg(2+). It depends on Mn(2+) as a cofactor.

Its function is as follows. Mediates initiation of conjugal transfer possibly by introducing a single-stranded nick at the potential origin of transfer. This Lactococcus lactis subsp. cremoris (strain MG1363) protein is Group II intron-interrupted relaxase LtrB (ltrBE1).